Reading from the N-terminus, the 257-residue chain is MLPSELVKYKKKSQKIIALTAWDSISGSLAEHSGADIVLVGDSLAMVCLGYKSTLPVTLENMIYHTNAVSRGFSKEIEEQSLLVCDMPFLTYQCGENKAVEYAGKIIKNTYAKAVKVEGADPEVQNVISRLIRMGIPVMGHLGLTPQSYLNLGFKQQGNNSESHEKIKRDALSLEKLGCFSIVLEHIPELLAKEIQTELEIPTIGIGAGKFCDGQVRVTADLLGLNDKQPPFCRPIIDGKKIFGEKLKEWVAAEKLN.

Mg(2+) is bound by residues Asp-42 and Asp-86. Residues 42-43, Asp-86, and Lys-116 each bind 3-methyl-2-oxobutanoate; that span reads DS. Glu-118 is a Mg(2+) binding site. The Proton acceptor role is filled by Glu-185.

The protein belongs to the PanB family. As to quaternary structure, homodecamer; pentamer of dimers. The cofactor is Mg(2+).

The protein resides in the cytoplasm. It carries out the reaction 3-methyl-2-oxobutanoate + (6R)-5,10-methylene-5,6,7,8-tetrahydrofolate + H2O = 2-dehydropantoate + (6S)-5,6,7,8-tetrahydrofolate. It functions in the pathway cofactor biosynthesis; (R)-pantothenate biosynthesis; (R)-pantoate from 3-methyl-2-oxobutanoate: step 1/2. Its function is as follows. Catalyzes the reversible reaction in which hydroxymethyl group from 5,10-methylenetetrahydrofolate is transferred onto alpha-ketoisovalerate to form ketopantoate. The polypeptide is 3-methyl-2-oxobutanoate hydroxymethyltransferase (Prochlorococcus marinus subsp. pastoris (strain CCMP1986 / NIES-2087 / MED4)).